The chain runs to 255 residues: Small ribosomal subunit protein eS1 (255 aa).

Residues 1–18 (MAVGKNKRLSKGKKGLKK) are compositionally biased toward basic residues. Positions 1 to 28 (MAVGKNKRLSKGKKGLKKRTQDPFSRKD) are disordered. Ala2 carries the N-acetylalanine; partial modification. Basic and acidic residues predominate over residues 19–28 (RTQDPFSRKD).

The protein belongs to the eukaryotic ribosomal protein eS1 family. Component of the small ribosomal subunit. Mature ribosomes consist of a small (40S) and a large (60S) subunit. The 40S subunit contains about 33 different proteins and 1 molecule of RNA (18S). The 60S subunit contains about 49 different proteins and 3 molecules of RNA (25S, 5.8S and 5S).

The protein resides in the cytoplasm. This is Small ribosomal subunit protein eS1 from Ajellomyces dermatitidis (strain ER-3 / ATCC MYA-2586) (Blastomyces dermatitidis).